Here is a 149-residue protein sequence, read N- to C-terminus: Macrodomain Ter protein (149 aa).

It belongs to the MatP family. As to quaternary structure, homodimer.

Its subcellular location is the cytoplasm. Its function is as follows. Required for spatial organization of the terminus region of the chromosome (Ter macrodomain) during the cell cycle. Prevents early segregation of duplicated Ter macrodomains during cell division. Binds specifically to matS, which is a 13 bp signature motif repeated within the Ter macrodomain. This chain is Macrodomain Ter protein, found in Vibrio vulnificus (strain YJ016).